The chain runs to 147 residues: Deoxyuridine 5'-triphosphate nucleotidohydrolase (147 aa).

Residues 67 to 69, N80, and 84 to 86 contribute to the substrate site; these read RSG and LID.

It belongs to the dUTPase family. The cofactor is Mg(2+).

The enzyme catalyses dUTP + H2O = dUMP + diphosphate + H(+). It participates in pyrimidine metabolism; dUMP biosynthesis; dUMP from dCTP (dUTP route): step 2/2. This enzyme is involved in nucleotide metabolism: it produces dUMP, the immediate precursor of thymidine nucleotides and it decreases the intracellular concentration of dUTP so that uracil cannot be incorporated into DNA. This Dictyoglomus turgidum (strain DSM 6724 / Z-1310) protein is Deoxyuridine 5'-triphosphate nucleotidohydrolase.